The primary structure comprises 64 residues: Large ribosomal subunit protein bL32 (64 aa).

A disordered region spans residues 1–36 (MAVQKSRVTPSRRGQRRSHDALSAKQLSTDPTTGEV).

This sequence belongs to the bacterial ribosomal protein bL32 family.

The sequence is that of Large ribosomal subunit protein bL32 from Stenotrophomonas maltophilia (strain K279a).